We begin with the raw amino-acid sequence, 611 residues long: Rho GTPase-activating protein gacN (611 aa).

The 196-residue stretch at 24–219 folds into the Rho-GAP domain; that stretch reads KTFKKILKPG…VLIEEFHVLY (196 aa). Residues 236–499 adopt a coiled-coil conformation; sequence IREDKRSTSE…TKLQKSSSSS (264 aa). Positions 476–491 are enriched in basic and acidic residues; the sequence is NQLEKEKSKLQDELTK. Positions 476–550 are disordered; the sequence is NQLEKEKSKL…TTPPPPLDED (75 aa). Low complexity-rich tracts occupy residues 495-509 and 527-540; these read SSSS…SSSS and TTTT…AQQP.

The protein localises to the cytoplasm. In terms of biological role, rho GTPase-activating protein involved in the signal transduction pathway. This is Rho GTPase-activating protein gacN (gacN) from Dictyostelium discoideum (Social amoeba).